A 124-amino-acid polypeptide reads, in one-letter code: Small ribosomal subunit protein uS12 (124 aa).

Position 89 is a 3-methylthioaspartic acid (Asp-89).

This sequence belongs to the universal ribosomal protein uS12 family. In terms of assembly, part of the 30S ribosomal subunit. Contacts proteins S8 and S17. May interact with IF1 in the 30S initiation complex.

In terms of biological role, with S4 and S5 plays an important role in translational accuracy. Functionally, interacts with and stabilizes bases of the 16S rRNA that are involved in tRNA selection in the A site and with the mRNA backbone. Located at the interface of the 30S and 50S subunits, it traverses the body of the 30S subunit contacting proteins on the other side and probably holding the rRNA structure together. The combined cluster of proteins S8, S12 and S17 appears to hold together the shoulder and platform of the 30S subunit. The protein is Small ribosomal subunit protein uS12 of Prochlorococcus marinus (strain SARG / CCMP1375 / SS120).